Consider the following 134-residue polypeptide: Cell division protein SepF (134 aa).

This sequence belongs to the SepF family. As to quaternary structure, homodimer. Interacts with FtsZ.

The protein localises to the cytoplasm. Functionally, cell division protein that is part of the divisome complex and is recruited early to the Z-ring. Probably stimulates Z-ring formation, perhaps through the cross-linking of FtsZ protofilaments. Its function overlaps with FtsA. The protein is Cell division protein SepF of Caldanaerobacter subterraneus subsp. tengcongensis (strain DSM 15242 / JCM 11007 / NBRC 100824 / MB4) (Thermoanaerobacter tengcongensis).